The chain runs to 355 residues: Acidic fibroblast growth factor intracellular-binding protein B (355 aa).

As to quaternary structure, interacts with IER2.

It is found in the nucleus. Its subcellular location is the endomembrane system. In terms of biological role, mediates with IER2 FGF-signaling in Kupffer's vesicle ciliogenesis and in the establishment of laterality in the embryo. May be involved in mitogenic function of FGF1. This is Acidic fibroblast growth factor intracellular-binding protein B from Danio rerio (Zebrafish).